Reading from the N-terminus, the 216-residue chain is Probable transaldolase (216 aa).

Lys-85 functions as the Schiff-base intermediate with substrate in the catalytic mechanism.

The protein belongs to the transaldolase family. Type 3B subfamily.

Its subcellular location is the cytoplasm. The catalysed reaction is D-sedoheptulose 7-phosphate + D-glyceraldehyde 3-phosphate = D-erythrose 4-phosphate + beta-D-fructose 6-phosphate. It functions in the pathway carbohydrate degradation; pentose phosphate pathway; D-glyceraldehyde 3-phosphate and beta-D-fructose 6-phosphate from D-ribose 5-phosphate and D-xylulose 5-phosphate (non-oxidative stage): step 2/3. Its function is as follows. Transaldolase is important for the balance of metabolites in the pentose-phosphate pathway. The protein is Probable transaldolase of Dehalococcoides mccartyi (strain ATCC BAA-2266 / KCTC 15142 / 195) (Dehalococcoides ethenogenes (strain 195)).